Reading from the N-terminus, the 37-residue chain is MKVRASVKKMCDKCKVIKRRGIVRVICENKKHKQRQG.

This sequence belongs to the bacterial ribosomal protein bL36 family.

The polypeptide is Large ribosomal subunit protein bL36 (Aliarcobacter butzleri (strain RM4018) (Arcobacter butzleri)).